Reading from the N-terminus, the 577-residue chain is Phosphoenolpyruvate-protein phosphotransferase (577 aa).

Catalysis depends on His191, which acts as the Tele-phosphohistidine intermediate. The phosphoenolpyruvate site is built by Arg298 and Arg334. Positions 435 and 459 each coordinate Mg(2+). Phosphoenolpyruvate is bound by residues 458–459 (ND) and Arg469. Cys506 functions as the Proton donor in the catalytic mechanism.

It belongs to the PEP-utilizing enzyme family. Homodimer. Mg(2+) serves as cofactor.

It localises to the cytoplasm. It catalyses the reaction L-histidyl-[protein] + phosphoenolpyruvate = N(pros)-phospho-L-histidyl-[protein] + pyruvate. Its function is as follows. General (non sugar-specific) component of the phosphoenolpyruvate-dependent sugar phosphotransferase system (sugar PTS). This major carbohydrate active-transport system catalyzes the phosphorylation of incoming sugar substrates concomitantly with their translocation across the cell membrane. Enzyme I transfers the phosphoryl group from phosphoenolpyruvate (PEP) to the phosphoryl carrier protein (HPr). This is Phosphoenolpyruvate-protein phosphotransferase (ptsI) from Streptococcus equinus (Streptococcus bovis).